Reading from the N-terminus, the 370-residue chain is Dual-specificity RNA methyltransferase RlmN (370 aa).

Glutamate 93 (proton acceptor) is an active-site residue. In terms of domain architecture, Radical SAM core spans glutamate 99 to aspartate 337. A disulfide bridge links cysteine 106 with cysteine 343. The [4Fe-4S] cluster site is built by cysteine 113, cysteine 117, and cysteine 120. S-adenosyl-L-methionine is bound by residues glycine 167 to glutamate 168, serine 199, serine 221 to histidine 223, and asparagine 300. The active-site S-methylcysteine intermediate is the cysteine 343.

The protein belongs to the radical SAM superfamily. RlmN family. [4Fe-4S] cluster is required as a cofactor.

The protein localises to the cytoplasm. The enzyme catalyses adenosine(2503) in 23S rRNA + 2 reduced [2Fe-2S]-[ferredoxin] + 2 S-adenosyl-L-methionine = 2-methyladenosine(2503) in 23S rRNA + 5'-deoxyadenosine + L-methionine + 2 oxidized [2Fe-2S]-[ferredoxin] + S-adenosyl-L-homocysteine. The catalysed reaction is adenosine(37) in tRNA + 2 reduced [2Fe-2S]-[ferredoxin] + 2 S-adenosyl-L-methionine = 2-methyladenosine(37) in tRNA + 5'-deoxyadenosine + L-methionine + 2 oxidized [2Fe-2S]-[ferredoxin] + S-adenosyl-L-homocysteine. Specifically methylates position 2 of adenine 2503 in 23S rRNA and position 2 of adenine 37 in tRNAs. m2A2503 modification seems to play a crucial role in the proofreading step occurring at the peptidyl transferase center and thus would serve to optimize ribosomal fidelity. This Francisella tularensis subsp. tularensis (strain WY96-3418) protein is Dual-specificity RNA methyltransferase RlmN.